Here is a 303-residue protein sequence, read N- to C-terminus: Acetylglutamate kinase (303 aa).

Residues 76–77 (GG), R98, and N199 contribute to the substrate site.

It belongs to the acetylglutamate kinase family. ArgB subfamily.

The protein resides in the cytoplasm. It carries out the reaction N-acetyl-L-glutamate + ATP = N-acetyl-L-glutamyl 5-phosphate + ADP. Its pathway is amino-acid biosynthesis; L-arginine biosynthesis; N(2)-acetyl-L-ornithine from L-glutamate: step 2/4. Its function is as follows. Catalyzes the ATP-dependent phosphorylation of N-acetyl-L-glutamate. This chain is Acetylglutamate kinase, found in Clavibacter michiganensis subsp. michiganensis (strain NCPPB 382).